The sequence spans 392 residues: Cytochrome P450 monooxygenase ppzE (392 aa).

Residues 10 to 30 form a helical membrane-spanning segment; sequence LELVWFVALYPFACWTLFAVL. A glycan (N-linked (GlcNAc...) asparagine) is linked at asparagine 319. A heme-binding site is contributed by cysteine 353. Asparagine 372 is a glycosylation site (N-linked (GlcNAc...) asparagine).

It belongs to the cytochrome P450 family. It depends on heme as a cofactor.

It localises to the membrane. The protein operates within secondary metabolite biosynthesis. In terms of biological role, cytochrome P450 monooxygenase; part of the gene cluster that mediates the biosynthesis of pyrrolopyrazines, secondary metabolites showing insecticidal activity. The role of ppzE within the pathway has still to be determined. The single multifunctional NRPS ppzA is sufficient to produce peramine via condensation of 1-pyrroline-5-carboxylate and arginine, N-methylation of the alpha-amino group of arginine and reduction of the thioester and the cyclization to form an iminium ion resulting in release from the peptide synthetase. Deprotonation of this intermediate and oxidation of the pyrroline ring would give rise to peramine. In Epichloe species that produce only peramine, the peramine synthetase gene is not localized in a gene cluster, in contrast to Metarhizium species that contain additional pyrrolopyrazine biosynthesis genes. The 2-oxoglutarate-Fe(II) type oxidoreductase ppzC hydroxylates peramine to yield the newly identified compound 8-hydroxyperamine whereas ppzD converts L-proline into trans-4-hydroxy-L-proline, a precursor of peramine biosynthesis. The chain is Cytochrome P450 monooxygenase ppzE from Metarhizium rileyi (strain RCEF 4871) (Nomuraea rileyi).